We begin with the raw amino-acid sequence, 843 residues long: Neuroligin-1 (843 aa).

Positions 1-45 are cleaved as a signal peptide; it reads MALPRCMWPNYVWRAMMACVVHRGSGAPLTLCLLGCLLQTFHVLS. Over 46 to 697 the chain is Extracellular; it reads QKLDDVDPLV…DQRDYSTELS (652 aa). A glycan (N-linked (GlcNAc...) (complex) asparagine) is linked at Asn109. 2 cysteine pairs are disulfide-bonded: Cys117-Cys153 and Cys172-Cys181. 2 N-linked (GlcNAc...) (complex) asparagine glycosylation sites follow: Asn303 and Asn343. Cystine bridges form between Cys342/Cys353 and Cys512/Cys546. An N-linked (GlcNAc...) asparagine glycan is attached at Asn547. The tract at residues 647-688 is disordered; the sequence is TKVPSTDITLRPTRKNSTPVTSAFPTAKQDDPKQQPSPFSVD. A compositionally biased stretch (polar residues) spans 661–670; the sequence is KNSTPVTSAF. Residues Ser683 and Ser686 are each glycosylated (O-linked (GalNAc...) serine). A helical membrane pass occupies residues 698-718; the sequence is VTIAVGASLLFLNILAFAALY. Topologically, residues 719–843 are cytoplasmic; sequence YKKDKRRHDV…HPHSHSTTRV (125 aa). Positions 822–843 are disordered; the sequence is GGQNNTLPHPHPHPHSHSTTRV. Residues 831–843 are compositionally biased toward basic residues; the sequence is PHPHPHSHSTTRV.

Belongs to the type-B carboxylesterase/lipase family. Interacts with neurexins NRXN1, NRXN2 and NRXN3. Interaction with neurexins is mediated by heparan sulfate glycan modification on neurexin. Interacts with NLGN3. Interacts (via its C-terminus) with DLG4/PSD-95 (via PDZ domain 3). Interacts with GOPC. Interacts with AIP1 and PDZRN3. In terms of processing, the N-terminus is blocked. In terms of tissue distribution, expressed in brain, almost exclusively in neurons, and spinal cord. Detected in pancreas islet beta cells.

The protein resides in the cell membrane. It is found in the postsynaptic density. Its subcellular location is the synaptic cleft. It localises to the synaptic cell membrane. Its function is as follows. Cell surface protein involved in cell-cell-interactions via its interactions with neurexin family members. Plays a role in synapse function and synaptic signal transmission, and probably mediates its effects by recruiting and clustering other synaptic proteins. May promote the initial formation of synapses, but is not essential for this. In vitro, triggers the de novo formation of presynaptic structures. May be involved in specification of excitatory synapses. Required to maintain wakefulness quality and normal synchrony of cerebral cortex activity during wakefulness and sleep. The protein is involved in nervous system development. The protein is Neuroligin-1 (Nlgn1) of Rattus norvegicus (Rat).